The sequence spans 250 residues: Vacuolar protein sorting-associated protein 22 homolog 1 (250 aa).

The stretch at M35 to N55 forms a coiled coil.

It belongs to the SNF8 family. As to quaternary structure, component of the endosomal sorting complex required for transport II (ESCRT-II), composed of VPS22, VPS25 and VPS36.

The protein resides in the endosome. In terms of biological role, component of the endosomal sorting complex required for transport II (ESCRT-II), which is required for multivesicular body (MVB) formation and sorting of endosomal cargo proteins into MVBs. The ESCRT-II complex is probably involved in the recruitment of the ESCRT-III complex. The sequence is that of Vacuolar protein sorting-associated protein 22 homolog 1 (VP22-1) from Arabidopsis thaliana (Mouse-ear cress).